The chain runs to 524 residues: 2-isopropylmalate synthase (524 aa).

Positions 12–274 (VIIFDTTLRD…WNNIETTMLT (263 aa)) constitute a Pyruvate carboxyltransferase domain. Mn(2+) is bound by residues D21, H209, H211, and N245. A regulatory domain region spans residues 398-524 (KLNSLTVIAG…EAVPAVAAAG (127 aa)).

This sequence belongs to the alpha-IPM synthase/homocitrate synthase family. LeuA type 1 subfamily. Homodimer. Mn(2+) is required as a cofactor.

The protein localises to the cytoplasm. It catalyses the reaction 3-methyl-2-oxobutanoate + acetyl-CoA + H2O = (2S)-2-isopropylmalate + CoA + H(+). It participates in amino-acid biosynthesis; L-leucine biosynthesis; L-leucine from 3-methyl-2-oxobutanoate: step 1/4. Its function is as follows. Catalyzes the condensation of the acetyl group of acetyl-CoA with 3-methyl-2-oxobutanoate (2-ketoisovalerate) to form 3-carboxy-3-hydroxy-4-methylpentanoate (2-isopropylmalate). This chain is 2-isopropylmalate synthase, found in Rhodopseudomonas palustris (strain HaA2).